A 396-amino-acid chain; its full sequence is Argininosuccinate synthase (396 aa).

Residues 10-18 and A37 each bind ATP; that span reads AYSGGLDTS. The L-citrulline site is built by Y88 and S93. G118 is a binding site for ATP. Positions 120, 124, and 125 each coordinate L-aspartate. Residue N124 coordinates L-citrulline. The L-citrulline site is built by R128, S176, S185, E261, and Y273.

Belongs to the argininosuccinate synthase family. Type 1 subfamily. As to quaternary structure, homotetramer.

The protein resides in the cytoplasm. It catalyses the reaction L-citrulline + L-aspartate + ATP = 2-(N(omega)-L-arginino)succinate + AMP + diphosphate + H(+). The protein operates within amino-acid biosynthesis; L-arginine biosynthesis; L-arginine from L-ornithine and carbamoyl phosphate: step 2/3. The sequence is that of Argininosuccinate synthase from Nitratidesulfovibrio vulgaris (strain ATCC 29579 / DSM 644 / CCUG 34227 / NCIMB 8303 / VKM B-1760 / Hildenborough) (Desulfovibrio vulgaris).